We begin with the raw amino-acid sequence, 255 residues long: Ribosomal RNA large subunit methyltransferase E (255 aa).

The S-adenosyl-L-methionine site is built by G50, W52, D68, D84, and D108. Residue K148 is the Proton acceptor of the active site. The region spanning P195–E253 is the TRAM domain.

It belongs to the class I-like SAM-binding methyltransferase superfamily. RNA methyltransferase RlmE family.

The protein localises to the cytoplasm. It carries out the reaction uridine(2552) in 23S rRNA + S-adenosyl-L-methionine = 2'-O-methyluridine(2552) in 23S rRNA + S-adenosyl-L-homocysteine + H(+). Its function is as follows. Specifically methylates the uridine in position 2552 of 23S rRNA at the 2'-O position of the ribose in the fully assembled 50S ribosomal subunit. The sequence is that of Ribosomal RNA large subunit methyltransferase E from Methanothrix thermoacetophila (strain DSM 6194 / JCM 14653 / NBRC 101360 / PT) (Methanosaeta thermophila).